We begin with the raw amino-acid sequence, 512 residues long: 2,3-bisphosphoglycerate-independent phosphoglycerate mutase (512 aa).

Residues D12 and S62 each coordinate Mn(2+). The Phosphoserine intermediate role is filled by S62. Residues H123, 154 to 155 (RD), R181, R187, 253 to 256 (RPDR), and K336 each bind substrate. Mn(2+) is bound by residues D403, H407, D444, H445, and H462.

The protein belongs to the BPG-independent phosphoglycerate mutase family. In terms of assembly, monomer. The cofactor is Mn(2+).

The enzyme catalyses (2R)-2-phosphoglycerate = (2R)-3-phosphoglycerate. It participates in carbohydrate degradation; glycolysis; pyruvate from D-glyceraldehyde 3-phosphate: step 3/5. In terms of biological role, catalyzes the interconversion of 2-phosphoglycerate and 3-phosphoglycerate. The protein is 2,3-bisphosphoglycerate-independent phosphoglycerate mutase of Onion yellows phytoplasma (strain OY-M).